The primary structure comprises 147 residues: Transcriptional regulator MraZ (147 aa).

SpoVT-AbrB domains are found at residues 5 to 52 and 81 to 124; these read NHPT…PMEE and GQVV…NAEH.

Belongs to the MraZ family. Forms oligomers.

It localises to the cytoplasm. Its subcellular location is the nucleoid. The sequence is that of Transcriptional regulator MraZ from Koribacter versatilis (strain Ellin345).